Here is a 177-residue protein sequence, read N- to C-terminus: Peptidyl-prolyl cis-trans isomerase H (177 aa).

Ala2 carries the post-translational modification N-acetylalanine. The PPIase cyclophilin-type domain occupies 14 to 176 (FFDVSIGGQE…LPVVISQCGE (163 aa)).

Belongs to the cyclophilin-type PPIase family. PPIase H subfamily. Interacts directly with PRPF4. Part of a heteromeric complex containing PPIH, PRPF3 and PRPF4 that is stable in the absence of RNA. Component of the U4/U6-U5 tri-snRNP complex composed of the U4, U6 and U5 snRNAs and at least PRPF3, PRPF4, PRPF6, PRPF8, PRPF31, SNRNP200, TXNL4A, SNRNP40, DDX23, CD2BP2, PPIH, SNU13, EFTUD2, SART1 and USP39. Heterodimer with PRPF18.

The protein localises to the nucleus speckle. Its subcellular location is the cytoplasm. The catalysed reaction is [protein]-peptidylproline (omega=180) = [protein]-peptidylproline (omega=0). Inhibited by cyclosporin A. In terms of biological role, PPIase that catalyzes the cis-trans isomerization of proline imidic peptide bonds in oligopeptides and may therefore assist protein folding. Participates in pre-mRNA splicing. May play a role in the assembly of the U4/U5/U6 tri-snRNP complex, one of the building blocks of the spliceosome. May act as a chaperone. The polypeptide is Peptidyl-prolyl cis-trans isomerase H (PPIH) (Homo sapiens (Human)).